The chain runs to 2530 residues: Cullin-9 (2530 aa).

Lys87 participates in a covalent cross-link: Glycyl lysine isopeptide (Lys-Gly) (interchain with G-Cter in ubiquitin). The CPH domain occupies 367 to 440 (RSEFSSRSGY…HWHMLEILGP (74 aa)). Disordered regions lie at residues 585–639 (LPSS…KAQS) and 930–951 (RGSP…GSPE). A compositionally biased stretch (polar residues) spans 940–949 (TPSTQGQDGS). The residue at position 978 (Ser978) is a Phosphoserine. In terms of domain architecture, DOC spans 1145–1324 (PITIPFFDVF…RTCLFYTIRA (180 aa)). Position 1365–1372 (1365–1372 (AAQALGKT)) interacts with ATP. 2 disordered regions span residues 1435–1468 (EAPP…TPVC) and 1667–1690 (GDQE…GREL). Position 1459 is a phosphoserine (Ser1459). A Glycyl lysine isopeptide (Lys-Gly) (interchain with G-Cter in NEDD8) cross-link involves residue Lys1884. A TRIAD supradomain region spans residues 2070–2287 (RPDQCPVCVT…KDYYNCSAMV (218 aa)). Zn(2+)-binding residues include Cys2074, Cys2077, Cys2092, His2094, Cys2097, Cys2100, Cys2119, Cys2124, Cys2164, Cys2170, Cys2185, Cys2188, Cys2193, Cys2196, His2202, Cys2207, Cys2240, and Cys2243. The RING-type 1 zinc-finger motif lies at 2074-2124 (CPVCVTPLGPHDDSPSLCCLHCCCKSCWNEYLTTRIEQNFVLNCTCPIADC). An IBR-type zinc finger spans residues 2144-2207 (SKYEKALLRG…FPEAHYPASC (64 aa)). The RING-type 2; atypical zinc finger occupies 2240-2269 (CPSCQAPIEKNEGCLHMTCARCNHGFCWRC). Residue Cys2253 is part of the active site. 6 residues coordinate Zn(2+): Cys2258, Cys2261, Cys2266, Cys2269, His2277, and Cys2283. Position 2440 is a phosphoserine (Ser2440). A disordered region spans residues 2443–2530 (VETREVKGSN…DEDEDDESYD (88 aa)). Polar residues predominate over residues 2452 to 2462 (NVPSDQPQGSS). Residues 2459 to 2500 (QGSSGLEVEDEEEEEEEEEEEEEEEEEDVPEWQHEFDEELDN) are a coiled coil. Composition is skewed to acidic residues over residues 2465–2510 (EVED…EESE) and 2520–2530 (GDEDEDDESYD).

This sequence belongs to the cullin family. As to quaternary structure, component of a Cul9-RING complex consisting of CUL9 and RBX1; the CUL9-RBX1 complex is a heterododecamer composed of six CUL9 and six RBX1 protomers. Interacts (via C-terminal TRIAD/RBR supradomain) with E2 ubiquitin-conjugating enzyme UBE2L3. Interacts with CUL7; the interaction with the CUL7 component of the 3M complex leads to inhibition of CUL9 activity. The CUL7-CUL9 heterodimer seems to interact specifically with TP53, likely via the CPH domain. Forms a complex with p53/TP53 in the cytoplasm of unstressed cells. Interacts with UBCH7 and UBCH8. Post-translationally, autoubiquitinated by the CUL9-RBX1 complex at Lys-87. Neddylated. Neddylation is mediated by E1 enzyme UBA3-NAE1 complex and E2 enzyme UBE2F. Structural rearrangment of the C-terminal TRIAD/RBR supradomain may play a role in neddylation and deneddylation.

The protein resides in the cytoplasm. Core component of the Cul9-RING ubiquitin-protein ligase complex composed of CUL9 and RBX1. The CUL9-RBX1 complex mediates ubiquitination and subsequent degradation of BIRC5 and is required to maintain microtubule dynamics and genome integrity. Acts downstream of the 3M complex, which inhibits CUL9 activity and the ubiquitination of BIRC5. The CUL9-RBX1 complex also mediates mono-ubiquitination of p53/TP53. Acts as a cytoplasmic anchor protein in p53/TP53-associated protein complex. Regulates the subcellular localization of p53/TP53 and its subsequent function. Ubiquitinates apurinic/apyrimidinic endodeoxyribonuclease APEX2. Ubiquitination by the CUL9-RBX1 complex is predominantly mediated by E2 ubiquitin-conjugating enzymes UBE2L3 and UBE2D2. The polypeptide is Cullin-9 (Cul9) (Mus musculus (Mouse)).